Here is a 461-residue protein sequence, read N- to C-terminus: MSVRIEHDTFGEIEVPADKYWGAQTERSKRNFPVGKERMPIEVVYGFAQLKRAAAIANFDLGKLSEAKKDAIVYACDQILSGELDEHFPLVVWQTGSGTQSNMNVNEVVSYVANMYLKDHQSDESIHPNDDVNKSQSSNDTFPTAMHVALYQEVETKLEPALKLLRNTLKEKEDKFDSIIKIGRTHLQDATPIKLGQEISGWRYMLDRCETMLSESKKHILNLAIGGTAVGTGINAHPEFGDKVAHYISENTGYPFVSSENKFHALTAHDEVVQLHGTLKALAGDLMKIANDVRWLASGPRAGLAEISIPENEPGSSIMPGKVNPTQCEMLTMVAVQVMGNDTVVGFASSQGNFELNVYKPVIMHNTLQSIYLLADGMETFNNNCAVGIEPIEENIDNYLNQSLMLVTALNPHIGYEKAAQIAKKAHKEGLTLKESAIQTGYVTEEQFEAWIKPEDMVDPH.

Residues 97–99 (SGT), 127–130 (HPND), 137–139 (SSN), and Thr-185 each bind substrate. The active-site Proton donor/acceptor is His-186. Ser-316 is a catalytic residue. Residues Ser-317 and 322-324 (KVN) each bind substrate.

This sequence belongs to the class-II fumarase/aspartase family. Fumarase subfamily. As to quaternary structure, homotetramer.

The protein resides in the cytoplasm. It catalyses the reaction (S)-malate = fumarate + H2O. It functions in the pathway carbohydrate metabolism; tricarboxylic acid cycle; (S)-malate from fumarate: step 1/1. Involved in the TCA cycle. Catalyzes the stereospecific interconversion of fumarate to L-malate. This chain is Fumarate hydratase class II, found in Staphylococcus aureus (strain COL).